Consider the following 378-residue polypeptide: Spermidine/putrescine import ATP-binding protein PotA (378 aa).

One can recognise an ABC transporter domain in the interval 18-248 (VQLAGIRKCF…PKNLFVAGFI (231 aa)). Residue 50–57 (GPSGCGKT) participates in ATP binding.

The protein belongs to the ABC transporter superfamily. Spermidine/putrescine importer (TC 3.A.1.11.1) family. As to quaternary structure, the complex is composed of two ATP-binding proteins (PotA), two transmembrane proteins (PotB and PotC) and a solute-binding protein (PotD).

The protein localises to the cell inner membrane. The enzyme catalyses ATP + H2O + polyamine-[polyamine-binding protein]Side 1 = ADP + phosphate + polyamineSide 2 + [polyamine-binding protein]Side 1.. Its function is as follows. Part of the ABC transporter complex PotABCD involved in spermidine/putrescine import. Responsible for energy coupling to the transport system. This Shigella boydii serotype 4 (strain Sb227) protein is Spermidine/putrescine import ATP-binding protein PotA.